A 338-amino-acid polypeptide reads, in one-letter code: Fructose-1,6-bisphosphatase class 1 (338 aa).

Glu-92, Asp-113, Leu-115, and Asp-116 together coordinate Mg(2+). Substrate-binding positions include 116–119 (DGSS), Asn-208, and Lys-274. Glu-280 serves as a coordination point for Mg(2+).

Belongs to the FBPase class 1 family. In terms of assembly, homotetramer. Requires Mg(2+) as cofactor.

It is found in the cytoplasm. The enzyme catalyses beta-D-fructose 1,6-bisphosphate + H2O = beta-D-fructose 6-phosphate + phosphate. It functions in the pathway carbohydrate biosynthesis; gluconeogenesis. The chain is Fructose-1,6-bisphosphatase class 1 from Paramagnetospirillum magneticum (strain ATCC 700264 / AMB-1) (Magnetospirillum magneticum).